We begin with the raw amino-acid sequence, 436 residues long: Bystin (436 aa).

Residues 1–105 (MPKLKVTRGA…GSDEEDEEWP (105 aa)) are disordered. A Phosphoserine modification is found at Ser-54. A compositionally biased stretch (basic and acidic residues) spans 70–86 (TEHATGDRPAKPRERAT). A compositionally biased stretch (acidic residues) spans 96–105 (GSDEEDEEWP). Ser-97 bears the Phosphoserine mark. Thr-155 is subject to Phosphothreonine. Ser-166 and Ser-413 each carry phosphoserine.

It belongs to the bystin family. In terms of assembly, binds trophinin, tastin and cytokeratins.

The protein localises to the cytoplasm. It localises to the nucleus. Its subcellular location is the nucleolus. Required for processing of 20S pre-rRNA precursor and biogenesis of 40S ribosomal subunits. The chain is Bystin from Rattus norvegicus (Rat).